The following is a 141-amino-acid chain: Hemoglobin subunit alpha-1/2 (141 aa).

The region spanning 1–141 (VLSPADKKNV…VSTVLTSKYR (141 aa)) is the Globin domain. Residue serine 3 is modified to Phosphoserine. Residues lysine 7 and lysine 11 each carry the N6-succinyllysine modification. Position 16 is an N6-acetyllysine; alternate (lysine 16). Residue lysine 16 is modified to N6-succinyllysine; alternate. Tyrosine 24 bears the Phosphotyrosine mark. Phosphoserine is present on serine 35. At lysine 40 the chain carries N6-succinyllysine. Position 49 is a phosphoserine (serine 49). Position 58 (histidine 58) interacts with O2. Histidine 87 lines the heme b pocket. At serine 102 the chain carries Phosphoserine. Threonine 108 is modified (phosphothreonine). A phosphoserine mark is found at serine 124 and serine 131. 2 positions are modified to phosphothreonine: threonine 134 and threonine 137. A Phosphoserine modification is found at serine 138.

It belongs to the globin family. Heterotetramer of two alpha chains and two beta chains. As to expression, red blood cells.

In terms of biological role, involved in oxygen transport from the lung to the various peripheral tissues. The polypeptide is Hemoglobin subunit alpha-1/2 (Mandrillus sphinx (Mandrill)).